The primary structure comprises 454 residues: Serine/arginine (SR)-type shuttling mRNA binding protein HRB1 (454 aa).

Positions Met1–Pro141 are disordered. Residues Ser14–Arg24 are compositionally biased toward basic residues. Composition is skewed to basic and acidic residues over residues Arg25 to Leu38 and Lys50 to Arg113. Arg127 carries the omega-N-methylarginine modification. RRM domains follow at residues Asn161–Pro237 and His261–Ser338. Phosphoserine occurs at positions 338, 343, and 355. The region spanning Arg376–Arg453 is the RRM 3 domain.

In terms of processing, methylated by HMT1.

The protein resides in the cytoplasm. It is found in the nucleus. The protein localises to the P-body. Its subcellular location is the stress granule. In terms of biological role, binds to intron-containing transcripts and is involved in quality control for the export of spliced mRNAs from the nucleus. Binds to pre-mRNAs until splicing is completed or until faulty mRNAs are degraded. On correctly spliced mRNAs, GBP2 and HRB1 recruit MEX67 to allow nuclear export. On faulty mRNAs, GBP2 and HRB1 associate with the TRAMP complex that guides those pre-mRNAs to the exosome for degradation. The protein is Serine/arginine (SR)-type shuttling mRNA binding protein HRB1 of Saccharomyces cerevisiae (strain ATCC 204508 / S288c) (Baker's yeast).